The sequence spans 522 residues: Berberine bridge enzyme-like Cyn d 4 (522 aa).

Positions 1-25 (MARSRAFAFALLICAVAASCHVALS) are cleaved as a signal peptide. A disulfide bridge links cysteine 41 with cysteine 98. In terms of domain architecture, FAD-binding PCMH-type spans 76 to 252 (KTVKPLYIIT…ASWQVKLLPV (177 aa)). Asparagine 88 carries an N-linked (GlcNAc...) asparagine glycan. FAD is bound by residues 108–114 (VRSGGHD), serine 119, serine 152, 176–177 (VC), 181–185 (GVGGH), phenylalanine 191, glutamate 237, and valine 242. Residues 113–177 (HDYEGLSYRS…PKLGFPAGVC (65 aa)) constitute a cross-link (6-(S-cysteinyl)-8alpha-(pros-histidyl)-FAD (His-Cys)). Cysteine 308 and cysteine 329 are disulfide-bonded. 2 N-linked (GlcNAc...) asparagine glycosylation sites follow: asparagine 325 and asparagine 354. 461–465 (YVNYR) contacts FAD. The N-linked (GlcNAc...) asparagine glycan is linked to asparagine 477.

Belongs to the oxygen-dependent FAD-linked oxidoreductase family. As to quaternary structure, monomer. FAD serves as cofactor. In terms of processing, the FAD cofactor is bound via a bicovalent 6-S-cysteinyl, 8alpha-N1-histidyl FAD linkage. Post-translationally, the N-terminus is blocked. Glycosylated. N-glycosylated. Contains fucose, N-acetylglucosamine, and mannose as main carbohydrates (in a ratio of approximately 3:2:1), and a minute amount of xylose. The two most abundant oligosaccharides are Fuc(1)GlcNAc(2)Man(3) and Fuc(1)GlcNAc(2)Man(2), together comprising about 80% of the total carbohydrate content. They are structurally unusual in having a L-Fuc alpha-(1,3)-linked to Asn-linked GlcNAc without a Xyl beta-(1,2)-linked to the branching Man. The other oligosaccharides make up only 9% of the total carbohydrate content and are characterized by the presence of Xyl beta-(1,2)-linked to the branching Man. In terms of tissue distribution, expressed in pollen (at protein level).

This is Berberine bridge enzyme-like Cyn d 4 from Cynodon dactylon (Bermuda grass).